A 387-amino-acid polypeptide reads, in one-letter code: Mannitol-1-phosphate 5-dehydrogenase (387 aa).

Residue 3-14 (AVHFGAGNIGRG) participates in NAD(+) binding.

Belongs to the mannitol dehydrogenase family.

It carries out the reaction D-mannitol 1-phosphate + NAD(+) = beta-D-fructose 6-phosphate + NADH + H(+). This is Mannitol-1-phosphate 5-dehydrogenase from Pseudarthrobacter chlorophenolicus (strain ATCC 700700 / DSM 12829 / CIP 107037 / JCM 12360 / KCTC 9906 / NCIMB 13794 / A6) (Arthrobacter chlorophenolicus).